Consider the following 595-residue polypeptide: Aspartate--tRNA(Asp/Asn) ligase (595 aa).

Glu178 is an L-aspartate binding site. The segment at 202–205 is aspartate; that stretch reads QLFK. An L-aspartate-binding site is contributed by Arg224. ATP is bound by residues 224 to 226 and Gln233; that span reads RDE. His458 serves as a coordination point for L-aspartate. Glu488 lines the ATP pocket. Arg495 serves as a coordination point for L-aspartate. 540 to 543 is a binding site for ATP; sequence GLDR.

Belongs to the class-II aminoacyl-tRNA synthetase family. Type 1 subfamily. As to quaternary structure, homodimer.

It is found in the cytoplasm. The catalysed reaction is tRNA(Asx) + L-aspartate + ATP = L-aspartyl-tRNA(Asx) + AMP + diphosphate. In terms of biological role, aspartyl-tRNA synthetase with relaxed tRNA specificity since it is able to aspartylate not only its cognate tRNA(Asp) but also tRNA(Asn). Reaction proceeds in two steps: L-aspartate is first activated by ATP to form Asp-AMP and then transferred to the acceptor end of tRNA(Asp/Asn). This Trichodesmium erythraeum (strain IMS101) protein is Aspartate--tRNA(Asp/Asn) ligase.